Consider the following 497-residue polypeptide: Beta-glucosidase 8 (497 aa).

Positions 1 to 22 (MKHFNLLSIILVIVLATSYIDA) are cleaved as a signal peptide. An a beta-D-glucoside-binding site is contributed by Gln-42. Asn-65 carries N-linked (GlcNAc...) asparagine glycosylation. A beta-D-glucoside-binding positions include His-139 and 184–185 (NE). The active-site Proton donor is Glu-185. Asn-202 carries N-linked (GlcNAc...) asparagine glycosylation. A beta-D-glucoside is bound at residue Tyr-319. Asn-354 carries an N-linked (GlcNAc...) asparagine glycan. A beta-D-glucoside is bound by residues Glu-387, Trp-430, and Phe-446. Residue Glu-387 is the Nucleophile of the active site. N-linked (GlcNAc...) asparagine glycans are attached at residues Asn-452, Asn-474, and Asn-490.

Belongs to the glycosyl hydrolase 1 family.

The catalysed reaction is Hydrolysis of terminal, non-reducing beta-D-glucosyl residues with release of beta-D-glucose.. This chain is Beta-glucosidase 8, found in Arabidopsis thaliana (Mouse-ear cress).